Here is a 182-residue protein sequence, read N- to C-terminus: Transcription termination/antitermination protein NusG (182 aa).

Residues valine 131–valine 163 enclose the KOW domain.

It belongs to the NusG family.

Its function is as follows. Participates in transcription elongation, termination and antitermination. This is Transcription termination/antitermination protein NusG from Staphylococcus aureus (strain NCTC 8325 / PS 47).